The following is a 469-amino-acid chain: 3-phosphoshikimate 1-carboxyvinyltransferase (469 aa).

The interval 21-45 (KDTILTHSDQPRPLQSRANGPLTGK) is disordered. Residues K52, S53, and R57 each coordinate 3-phosphoshikimate. K52 contributes to the phosphoenolpyruvate binding site. Residues G125 and R153 each contribute to the phosphoenolpyruvate site. 3-phosphoshikimate contacts are provided by S199, Q201, D352, and K379. Q201 contacts phosphoenolpyruvate. D352 acts as the Proton acceptor in catalysis. R383 and R426 together coordinate phosphoenolpyruvate.

This sequence belongs to the EPSP synthase family. Monomer.

Its subcellular location is the cytoplasm. The enzyme catalyses 3-phosphoshikimate + phosphoenolpyruvate = 5-O-(1-carboxyvinyl)-3-phosphoshikimate + phosphate. The protein operates within metabolic intermediate biosynthesis; chorismate biosynthesis; chorismate from D-erythrose 4-phosphate and phosphoenolpyruvate: step 6/7. Functionally, catalyzes the transfer of the enolpyruvyl moiety of phosphoenolpyruvate (PEP) to the 5-hydroxyl of shikimate-3-phosphate (S3P) to produce enolpyruvyl shikimate-3-phosphate and inorganic phosphate. The sequence is that of 3-phosphoshikimate 1-carboxyvinyltransferase from Bradyrhizobium diazoefficiens (strain JCM 10833 / BCRC 13528 / IAM 13628 / NBRC 14792 / USDA 110).